We begin with the raw amino-acid sequence, 274 residues long: ATP synthase subunit a (274 aa).

The next 5 helical transmembrane spans lie at 43 to 63 (TLNI…LLVF), 103 to 123 (VIAP…MMDL), 149 to 169 (DVSI…FYSI), 223 to 243 (LIFI…LSVP), and 245 to 265 (AIFH…LTIV).

It belongs to the ATPase A chain family. F-type ATPases have 2 components, CF(1) - the catalytic core - and CF(0) - the membrane proton channel. CF(1) has five subunits: alpha(3), beta(3), gamma(1), delta(1), epsilon(1). CF(0) has three main subunits: a(1), b(2) and c(9-12). The alpha and beta chains form an alternating ring which encloses part of the gamma chain. CF(1) is attached to CF(0) by a central stalk formed by the gamma and epsilon chains, while a peripheral stalk is formed by the delta and b chains.

The protein resides in the cell inner membrane. Key component of the proton channel; it plays a direct role in the translocation of protons across the membrane. This chain is ATP synthase subunit a, found in Yersinia pestis bv. Antiqua (strain Angola).